The sequence spans 77 residues: Translational regulator CsrA (77 aa).

Positions 58–77 (ANRRTAEETLDQASRLLSQK) are disordered. Positions 68 to 77 (DQASRLLSQK) are enriched in polar residues.

This sequence belongs to the CsrA/RsmA family. Homodimer; the beta-strands of each monomer intercalate to form a hydrophobic core, while the alpha-helices form wings that extend away from the core.

The protein resides in the cytoplasm. A translational regulator that binds mRNA to regulate translation initiation and/or mRNA stability. Usually binds in the 5'-UTR at or near the Shine-Dalgarno sequence preventing ribosome-binding, thus repressing translation. Its main target seems to be the major flagellin gene, while its function is anatagonized by FliW. The polypeptide is Translational regulator CsrA (Magnetococcus marinus (strain ATCC BAA-1437 / JCM 17883 / MC-1)).